Consider the following 203-residue polypeptide: Urease accessory protein UreE (203 aa).

A compositionally biased stretch (basic and acidic residues) spans 170–190; the sequence is EHHGHSHSRSHDHDHDHDHQH. The disordered stretch occupies residues 170-203; sequence EHHGHSHSRSHDHDHDHDHQHGPSCSHGHHHGHR.

This sequence belongs to the UreE family.

It is found in the cytoplasm. Functionally, involved in urease metallocenter assembly. Binds nickel. Probably functions as a nickel donor during metallocenter assembly. This Burkholderia pseudomallei (strain 1710b) protein is Urease accessory protein UreE.